Reading from the N-terminus, the 84-residue chain is uncharacterized protein (84 aa).

The chain crosses the membrane as a helical span at residues 13-35; that stretch reads TTLVLTIISTTTTTLFAIIQLYL. The stretch at 41–84 forms a coiled coil; sequence LKDAVKEIVNSELSNLKTEIEELKIKQDELSRQVEEIKRKLDQK.

The protein resides in the host membrane. This is an uncharacterized protein from Sulfolobus islandicus rod-shaped virus 1 (SIRV-1).